The following is a 316-amino-acid chain: Aspartate carbamoyltransferase catalytic subunit (316 aa).

Carbamoyl phosphate contacts are provided by Arg56 and Thr57. Residue Lys84 coordinates L-aspartate. 3 residues coordinate carbamoyl phosphate: Arg106, His139, and Gln142. L-aspartate contacts are provided by Arg172 and Arg224. Residues Gly268 and Pro269 each contribute to the carbamoyl phosphate site.

It belongs to the aspartate/ornithine carbamoyltransferase superfamily. ATCase family. Heterododecamer (2C3:3R2) of six catalytic PyrB chains organized as two trimers (C3), and six regulatory PyrI chains organized as three dimers (R2).

It catalyses the reaction carbamoyl phosphate + L-aspartate = N-carbamoyl-L-aspartate + phosphate + H(+). The protein operates within pyrimidine metabolism; UMP biosynthesis via de novo pathway; (S)-dihydroorotate from bicarbonate: step 2/3. In terms of biological role, catalyzes the condensation of carbamoyl phosphate and aspartate to form carbamoyl aspartate and inorganic phosphate, the committed step in the de novo pyrimidine nucleotide biosynthesis pathway. In Ligilactobacillus salivarius (strain UCC118) (Lactobacillus salivarius), this protein is Aspartate carbamoyltransferase catalytic subunit.